The chain runs to 203 residues: Urease accessory protein UreG (203 aa).

13–20 serves as a coordination point for GTP; that stretch reads GPVGSGKT.

It belongs to the SIMIBI class G3E GTPase family. UreG subfamily. Homodimer. UreD, UreF and UreG form a complex that acts as a GTP-hydrolysis-dependent molecular chaperone, activating the urease apoprotein by helping to assemble the nickel containing metallocenter of UreC. The UreE protein probably delivers the nickel.

It is found in the cytoplasm. Its function is as follows. Facilitates the functional incorporation of the urease nickel metallocenter. This process requires GTP hydrolysis, probably effectuated by UreG. In Psychromonas ingrahamii (strain DSM 17664 / CCUG 51855 / 37), this protein is Urease accessory protein UreG.